The following is a 51-amino-acid chain: Cuticle protein CP575 (51 aa).

The Chitin-binding type R&amp;R domain occupies 1–51 (GDIIDVDNDLFEHEQDGVAGTSVHGEYEAYDAYGNEYEVKYIADHLGFRVL).

As to expression, calcified shell.

The chain is Cuticle protein CP575 from Cancer pagurus (Rock crab).